We begin with the raw amino-acid sequence, 442 residues long: D-serine dehydratase (442 aa).

At lysine 118 the chain carries N6-(pyridoxal phosphate)lysine.

This sequence belongs to the serine/threonine dehydratase family. DsdA subfamily. In terms of assembly, monomer. Requires pyridoxal 5'-phosphate as cofactor.

It catalyses the reaction D-serine = pyruvate + NH4(+). The polypeptide is D-serine dehydratase (Escherichia coli O81 (strain ED1a)).